We begin with the raw amino-acid sequence, 81 residues long: Costars family protein ABRACL (81 aa).

Met-1 is subject to N-acetylmethionine.

This sequence belongs to the costars family.

This chain is Costars family protein ABRACL (Abracl), found in Mus musculus (Mouse).